The following is a 408-amino-acid chain: Secreted mono- and diacylglycerol lipase 2 (408 aa).

The signal sequence occupies residues 1 to 24 (MRFKLADSLSLITVQLILATSTLA). The N-linked (GlcNAc...) asparagine glycan is linked to N177. S217 serves as the catalytic Nucleophile. Residues D283 and H374 contribute to the active site.

This sequence belongs to the AB hydrolase superfamily. Lipase family. Class 3 subfamily.

Its subcellular location is the secreted. It catalyses the reaction a monoacylglycerol + H2O = glycerol + a fatty acid + H(+). The catalysed reaction is a diacylglycerol + H2O = a monoacylglycerol + a fatty acid + H(+). Functionally, secreted mono- and diacylglycerol lipase involved in plant virulence. Has a substrate preference for p-nitrophenyl esters with a carbon chain length of C10 (p-nitrophenyl caprate). This is Secreted mono- and diacylglycerol lipase 2 from Gibberella zeae (strain ATCC MYA-4620 / CBS 123657 / FGSC 9075 / NRRL 31084 / PH-1) (Wheat head blight fungus).